The following is a 614-amino-acid chain: Probable peptide-binding protein YejA (614 aa).

The N-terminal stretch at 1–27 (MILAPLKSRILIALAASALLIPAVASA) is a signal peptide.

The protein belongs to the bacterial solute-binding protein 5 family. The complex is composed of one ATP-binding protein (YejF), two transmembrane proteins (YejB and YejE) and a solute-binding protein (YejA).

The protein resides in the periplasm. Probably part of the ABC transporter complex YejABEF, which is likely involved in broad-spectrum peptide import. The chain is Probable peptide-binding protein YejA from Agrobacterium fabrum (strain C58 / ATCC 33970) (Agrobacterium tumefaciens (strain C58)).